Reading from the N-terminus, the 85-residue chain is Large ribosomal subunit protein bL27 (85 aa).

The tract at residues methionine 1–glycine 22 is disordered. Over residues alanine 7–glutamine 19 the composition is skewed to polar residues.

It belongs to the bacterial ribosomal protein bL27 family.

This is Large ribosomal subunit protein bL27 from Leifsonia xyli subsp. xyli (strain CTCB07).